A 200-amino-acid chain; its full sequence is Small ribosomal subunit protein uS4 (200 aa).

The S4 RNA-binding domain occupies 92 to 155; that stretch reads SRLDNLVYRM…RNLTVVKEAL (64 aa).

Belongs to the universal ribosomal protein uS4 family. In terms of assembly, part of the 30S ribosomal subunit. Contacts protein S5. The interaction surface between S4 and S5 is involved in control of translational fidelity.

Functionally, one of the primary rRNA binding proteins, it binds directly to 16S rRNA where it nucleates assembly of the body of the 30S subunit. In terms of biological role, with S5 and S12 plays an important role in translational accuracy. The polypeptide is Small ribosomal subunit protein uS4 (Shouchella clausii (strain KSM-K16) (Alkalihalobacillus clausii)).